The following is a 152-amino-acid chain: SFSGATTLMIAHGLTSSMYFCLANSNYERTHNRTMLLSRGLQILLPLTAFWWLTASLTNLALPPTINLLGELFVITTSFSWSHITIVLTGLNMLITALYSLHMFITVQRGTLTHHMINMKPPFTRENMLMFMHLAPIILLSLNPNIILGFTS.

A run of 4 helical transmembrane segments spans residues 2–22 (FSGATTLMIAHGLTSSMYFCL), 43–63 (ILLPLTAFWWLTASLTNLALP), 84–104 (ITIVLTGLNMLITALYSLHMF), and 128–148 (MLMFMHLAPIILLSLNPNIIL).

It belongs to the complex I subunit 4 family.

Its subcellular location is the mitochondrion membrane. It catalyses the reaction a ubiquinone + NADH + 5 H(+)(in) = a ubiquinol + NAD(+) + 4 H(+)(out). Its function is as follows. Core subunit of the mitochondrial membrane respiratory chain NADH dehydrogenase (Complex I) that is believed to belong to the minimal assembly required for catalysis. Complex I functions in the transfer of electrons from NADH to the respiratory chain. The immediate electron acceptor for the enzyme is believed to be ubiquinone. This chain is NADH-ubiquinone oxidoreductase chain 4 (MT-ND4), found in Macaca fascicularis (Crab-eating macaque).